A 303-amino-acid chain; its full sequence is Protoheme IX farnesyltransferase (303 aa).

9 helical membrane passes run 17 to 37, 42 to 62, 91 to 111, 114 to 134, 142 to 162, 168 to 188, 208 to 228, 231 to 251, and 270 to 290; these read GVVMLLMVTAVAGMFLATEPA, LATFIPAFVGLSLAMMASAAI, AAITFAVLLATASMIMLYFLV, LTAWLTLFGFVGYAFIYTLYL, IVIGGIAGAIPPLLGWTAVTG, AWLLVLIIFVWTPPHFWALAI, IPFTRESVLYYTILLFICTLL, LTGMSDLIYLLSALILGLVFL, and FGYSITYLFALFTALLVDHYL.

It belongs to the UbiA prenyltransferase family. Protoheme IX farnesyltransferase subfamily.

The protein localises to the cell inner membrane. It catalyses the reaction heme b + (2E,6E)-farnesyl diphosphate + H2O = Fe(II)-heme o + diphosphate. The protein operates within porphyrin-containing compound metabolism; heme O biosynthesis; heme O from protoheme: step 1/1. In terms of biological role, converts heme B (protoheme IX) to heme O by substitution of the vinyl group on carbon 2 of heme B porphyrin ring with a hydroxyethyl farnesyl side group. The protein is Protoheme IX farnesyltransferase of Alcanivorax borkumensis (strain ATCC 700651 / DSM 11573 / NCIMB 13689 / SK2).